Consider the following 430-residue polypeptide: tRNA(Ile)-lysidine synthase (430 aa).

21–26 (SGGLDS) is a binding site for ATP.

This sequence belongs to the tRNA(Ile)-lysidine synthase family.

It localises to the cytoplasm. The enzyme catalyses cytidine(34) in tRNA(Ile2) + L-lysine + ATP = lysidine(34) in tRNA(Ile2) + AMP + diphosphate + H(+). Its function is as follows. Ligates lysine onto the cytidine present at position 34 of the AUA codon-specific tRNA(Ile) that contains the anticodon CAU, in an ATP-dependent manner. Cytidine is converted to lysidine, thus changing the amino acid specificity of the tRNA from methionine to isoleucine. The protein is tRNA(Ile)-lysidine synthase of Salmonella typhi.